The chain runs to 719 residues: B3 domain-containing protein Os03g0120900 (719 aa).

Residues 7–110 (HHHFIKVMVG…HFMVLPFGLN (104 aa)) constitute a DNA-binding region (TF-B3). 2 disordered regions span residues 328–381 (RGSF…RSEQ) and 412–443 (EEPQHNQGENEGNLDQVNNKETDEEQIERNAV). Over residues 351-366 (DSAENTLKERSEERQP) the composition is skewed to basic and acidic residues. Residues 416–430 (HNQGENEGNLDQVNN) show a composition bias toward polar residues.

The protein localises to the nucleus. This Oryza sativa subsp. japonica (Rice) protein is B3 domain-containing protein Os03g0120900.